Here is a 118-residue protein sequence, read N- to C-terminus: Large ribosomal subunit protein uL18 (118 aa).

It belongs to the universal ribosomal protein uL18 family. Part of the 50S ribosomal subunit; part of the 5S rRNA/L5/L18/L25 subcomplex. Contacts the 5S and 23S rRNAs.

Functionally, this is one of the proteins that bind and probably mediate the attachment of the 5S RNA into the large ribosomal subunit, where it forms part of the central protuberance. The sequence is that of Large ribosomal subunit protein uL18 from Cupriavidus pinatubonensis (strain JMP 134 / LMG 1197) (Cupriavidus necator (strain JMP 134)).